The chain runs to 106 residues: Toxin-like structure LSTX-D3 (106 aa).

Positions 1-20 (MMKVLVVVALLVTLISYSSS) are cleaved as a signal peptide. Residues 21 to 41 (EGIDDLEADELLSLMANEQTR) constitute a propeptide that is removed on maturation. 4 disulfides stabilise this stretch: cysteine 45-cysteine 60, cysteine 52-cysteine 69, cysteine 59-cysteine 85, and cysteine 71-cysteine 83.

The protein belongs to the neurotoxin 19 (CSTX) family. 02 (D7) subfamily. In terms of tissue distribution, expressed by the venom gland.

It localises to the secreted. The polypeptide is Toxin-like structure LSTX-D3 (Lycosa singoriensis (Wolf spider)).